Reading from the N-terminus, the 74-residue chain is UPF0435 protein BAA_0470 (74 aa).

The protein belongs to the UPF0435 family.

The protein is UPF0435 protein BAA_0470 of Bacillus anthracis (strain A0248).